The primary structure comprises 23 residues: Dahlein-4.1 (23 aa).

Expressed by the skin dorsal glands.

It localises to the secreted. Functionally, has no antimicrobial activity. This is Dahlein-4.1 from Ranoidea dahlii (Dahl's aquatic frog).